The primary structure comprises 164 residues: B-phycoerythrin alpha chain (164 aa).

The (2R,3E)-phycoerythrobilin site is built by Cys-82 and Cys-139.

This sequence belongs to the phycobiliprotein family. Heteromer of 6 alpha, 6 beta and one gamma chain. Post-translationally, contains two covalently linked bilin chromophores.

It localises to the plastid. The protein resides in the chloroplast thylakoid membrane. Light-harvesting photosynthetic bile pigment-protein from the phycobiliprotein complex. This Rhodella violacea (Red alga) protein is B-phycoerythrin alpha chain (cpeA).